The sequence spans 404 residues: Cysteine desulfurase IscS (404 aa).

Pyridoxal 5'-phosphate is bound by residues 75 to 76 (AT), N155, Q183, and 203 to 205 (SAH). K206 is subject to N6-(pyridoxal phosphate)lysine. T243 is a binding site for pyridoxal 5'-phosphate. Residue C328 is the Cysteine persulfide intermediate of the active site. C328 contributes to the [2Fe-2S] cluster binding site.

The protein belongs to the class-V pyridoxal-phosphate-dependent aminotransferase family. NifS/IscS subfamily. As to quaternary structure, homodimer. Forms a heterotetramer with IscU, interacts with other sulfur acceptors. The cofactor is pyridoxal 5'-phosphate.

The protein localises to the cytoplasm. It carries out the reaction (sulfur carrier)-H + L-cysteine = (sulfur carrier)-SH + L-alanine. It functions in the pathway cofactor biosynthesis; iron-sulfur cluster biosynthesis. Its function is as follows. Master enzyme that delivers sulfur to a number of partners involved in Fe-S cluster assembly, tRNA modification or cofactor biosynthesis. Catalyzes the removal of elemental sulfur atoms from cysteine to produce alanine. Functions as a sulfur delivery protein for Fe-S cluster synthesis onto IscU, an Fe-S scaffold assembly protein, as well as other S acceptor proteins. This Buchnera aphidicola subsp. Schizaphis graminum (strain Sg) protein is Cysteine desulfurase IscS.